Reading from the N-terminus, the 312-residue chain is Olfactory receptor 2M5 (312 aa).

Over 1 to 25 (MAWENQTFNSDFILLGIFNHSPTHT) the chain is Extracellular. N5 carries N-linked (GlcNAc...) asparagine glycosylation. The helical transmembrane segment at 26–49 (FLFFLVLAIFSVAFMGNSVMVLLI) threads the bilayer. Residues 50 to 57 (YLDTQLHT) lie on the Cytoplasmic side of the membrane. Residues 58–79 (PMYFLLSQLFLMDLMLICSTVP) traverse the membrane as a helical segment. Over 80–100 (KMAFNYLSGSKSISMAGCATQ) the chain is Extracellular. C97 and C189 form a disulfide bridge. Residues 101-120 (IFFYVSLLGSECFLLAVMSY) form a helical membrane-spanning segment. Residues 121 to 139 (DRYIAICHPLRYTNLMRPK) lie on the Cytoplasmic side of the membrane. Residues 140–158 (ICGLMTAFSWILGSMDAII) traverse the membrane as a helical segment. Residues 159–195 (DAVATFSFSYCGSREIAHFFCDFPSLLILSCNDTSIF) are Extracellular-facing. Residues 196–219 (EKVLFICCIVMIVFPVAIIIASYA) traverse the membrane as a helical segment. Residues 220 to 236 (RVILAVIHMGSGEGRRK) lie on the Cytoplasmic side of the membrane. Residues 237–259 (AFTTCSSHLMVVGMYYGAGLFMY) form a helical membrane-spanning segment. Residues 260–272 (IRPTSDRSPMQDK) lie on the Extracellular side of the membrane. Residues 273–292 (LVSVFYTILTPMLNPLIYSL) form a helical membrane-spanning segment. Residues 293 to 311 (RNKEVTRALRKVLGKGKCG) are Cytoplasmic-facing.

Belongs to the G-protein coupled receptor 1 family.

The protein resides in the cell membrane. Odorant receptor. The sequence is that of Olfactory receptor 2M5 (OR2M5) from Homo sapiens (Human).